The primary structure comprises 105 residues: UPF0145 protein HD_1349 (105 aa).

This sequence belongs to the UPF0145 family.

This Haemophilus ducreyi (strain 35000HP / ATCC 700724) protein is UPF0145 protein HD_1349.